The sequence spans 319 residues: HTH-type transcriptional regulator YidZ (319 aa).

In terms of domain architecture, HTH lysR-type spans 8–65; the sequence is LDLNLLLCLQLLMQERSVTKAAKRMNVTPSAVSKSLAKLRAWFDDPLFVNSPLGLSPT. Residues 25 to 44 constitute a DNA-binding region (H-T-H motif); that stretch reads VTKAAKRMNVTPSAVSKSLA.

The protein belongs to the LysR transcriptional regulatory family.

Its function is as follows. Involved in anaerobic NO protection. The polypeptide is HTH-type transcriptional regulator YidZ (Escherichia coli O17:K52:H18 (strain UMN026 / ExPEC)).